Here is a 325-residue protein sequence, read N- to C-terminus: H-2 class I histocompatibility antigen, Q10 alpha chain (325 aa).

A signal peptide spans 1–24; the sequence is MGAMAPRTLLLLLAAALAPTQTQA. Residues 25–114 form an alpha-1 region; it reads GSHSMRYFET…LLGYYNQSES (90 aa). Residues 25–310 lie on the Extracellular side of the membrane; it reads GSHSMRYFET…PPSTDSIMSH (286 aa). An N-linked (GlcNAc...) asparagine glycan is attached at asparagine 110. Residues 115–206 are alpha-2; it reads GSHTIQWMYG…ELGKETLLRT (92 aa). Disulfide bonds link cysteine 125-cysteine 188 and cysteine 227-cysteine 283. Positions 207–298 are alpha-3; that stretch reads DPPKTHVTHH…GLPEPLTLRW (92 aa). Residues 209-297 enclose the Ig-like C1-type domain; it reads PKTHVTHHPG…EGLPEPLTLR (89 aa). Asparagine 280 carries N-linked (GlcNAc...) asparagine glycosylation. Positions 299–310 are connecting peptide; sequence EPPPSTDSIMSH. A helical membrane pass occupies residues 311 to 324; the sequence is IADLLWPSLKLWWY.

This sequence belongs to the MHC class I family. As to quaternary structure, heterodimer of an alpha chain and a beta chain (beta-2-microglobulin).

It is found in the membrane. In terms of biological role, involved in the presentation of foreign antigens to the immune system. The chain is H-2 class I histocompatibility antigen, Q10 alpha chain (H2-Q10) from Mus musculus (Mouse).